Reading from the N-terminus, the 389-residue chain is Chalcone synthase 6 (389 aa).

C164 is a catalytic residue.

The protein belongs to the thiolase-like superfamily. Chalcone/stilbene synthases family.

The catalysed reaction is (E)-4-coumaroyl-CoA + 3 malonyl-CoA + 3 H(+) = 2',4,4',6'-tetrahydroxychalcone + 3 CO2 + 4 CoA. The protein operates within secondary metabolite biosynthesis; flavonoid biosynthesis. In terms of biological role, the primary product of this enzyme is 4,2',4',6'-tetrahydroxychalcone (also termed naringenin-chalcone or chalcone) which can under specific conditions spontaneously isomerize into naringenin. This chain is Chalcone synthase 6 (CHS6), found in Trifolium subterraneum (Subterranean clover).